A 341-amino-acid polypeptide reads, in one-letter code: uncharacterized protein (341 aa).

A run of 3 helical transmembrane segments spans residues Ile6–Trp26, Leu63–Ile83, and Ala137–Val157.

Its subcellular location is the cell membrane. This is an uncharacterized protein from Bacillus subtilis (strain 168).